An 81-amino-acid chain; its full sequence is Cytochrome b559 subunit alpha (81 aa).

Residues 21–35 traverse the membrane as a helical segment; sequence IIHSITIPMLFIAGW. H23 lines the heme pocket.

Belongs to the PsbE/PsbF family. As to quaternary structure, heterodimer of an alpha subunit and a beta subunit. PSII is composed of 1 copy each of membrane proteins PsbA, PsbB, PsbC, PsbD, PsbE, PsbF, PsbH, PsbI, PsbJ, PsbK, PsbL, PsbM, PsbT, PsbX, PsbY, PsbZ, Psb30/Ycf12, peripheral proteins PsbO, CyanoQ (PsbQ), PsbU, PsbV and a large number of cofactors. It forms dimeric complexes. The cofactor is heme b.

The protein resides in the cellular thylakoid membrane. Functionally, this b-type cytochrome is tightly associated with the reaction center of photosystem II (PSII). PSII is a light-driven water:plastoquinone oxidoreductase that uses light energy to abstract electrons from H(2)O, generating O(2) and a proton gradient subsequently used for ATP formation. It consists of a core antenna complex that captures photons, and an electron transfer chain that converts photonic excitation into a charge separation. This is Cytochrome b559 subunit alpha from Microcystis aeruginosa (strain NIES-843 / IAM M-2473).